Reading from the N-terminus, the 101-residue chain is MEKHNEHKTLNHKSSKEKDQITNRLKRIEGQVRGIQNMVENDRYCVDILVQISAVQAAMKNVALHLLEDHAHHCVADAIKSGDGEQAISELLDVFKKFTKS.

The disordered stretch occupies residues 1 to 22; that stretch reads MEKHNEHKTLNHKSSKEKDQIT. Residues cysteine 45, histidine 70, and cysteine 74 each coordinate Cu cation.

Belongs to the CsoR family. As to quaternary structure, homotetramer. Binds DNA with a stoichiometry of 2 tetramers per DNA.

It localises to the cytoplasm. Its function is as follows. Copper-sensitive repressor that has a key role in copper homeostasis. Negatively regulates expression of the copZA operon and of cutJ/ycnJ. In the absence of copper ions, binds with high affinity to the copZA promoter and represses the transcription. In the presence of copper ions, CsoR binds Cu(1+), which significantly decreases its DNA binding affinity and leads to the transcription of the genes. In Bacillus subtilis (strain 168), this protein is Copper-sensing transcriptional repressor CsoR (csoR).